Consider the following 137-residue polypeptide: Nucleoside diphosphate kinase (137 aa).

Positions 9, 57, 85, 91, 102, and 112 each coordinate ATP. His115 (pros-phosphohistidine intermediate) is an active-site residue.

The protein belongs to the NDK family. In terms of assembly, homotetramer. It depends on Mg(2+) as a cofactor.

It localises to the cytoplasm. It catalyses the reaction a 2'-deoxyribonucleoside 5'-diphosphate + ATP = a 2'-deoxyribonucleoside 5'-triphosphate + ADP. The catalysed reaction is a ribonucleoside 5'-diphosphate + ATP = a ribonucleoside 5'-triphosphate + ADP. Its function is as follows. Major role in the synthesis of nucleoside triphosphates other than ATP. The ATP gamma phosphate is transferred to the NDP beta phosphate via a ping-pong mechanism, using a phosphorylated active-site intermediate. The chain is Nucleoside diphosphate kinase from Campylobacter jejuni subsp. jejuni serotype O:23/36 (strain 81-176).